Reading from the N-terminus, the 467-residue chain is MKFWRPGITGKLFLAIFATCIVLLISMHWAVRISFERGFIDYIKHGNEQRLQLLSDALGEQYAQHGNWRFLRNNDRFVFQILRSFEHDNSEDKPGPGMPPHGWRTQFWVVDQNNKVLVGPRAPIPPDGTRRPILVNGAEVGAVIASPVERLTRNTDINFDKQQRQTSWLIVALATLLAALATFLLARGLLAPVKRLVDGTHKLAAGDFTTRVTPTSEDELGKLAQDFNQLASTLEKNQQMRRDFMADISHELRTPLAVLRGELEAIQDGVRKFTPETVASLQAEVGTLTKLVDDLHQLSMSDEGALAYQKAPVDLIPLLEVAGGAFRERFASRGLKLQFSLPDSITVFGDRDRLMQLFNNLLENSLRYTDSGGSLQISAGQRDKTVRLTFADSAPGVSDDQLQKLFERFYRTEGSRNRASGGSGLGLAICLNIVEAHNGRIIAAHSPFGGVSITVELPLERDLQREV.

The Cytoplasmic segment spans residues 1-11 (MKFWRPGITGK). A helical membrane pass occupies residues 12–32 (LFLAIFATCIVLLISMHWAVR). The Periplasmic segment spans residues 33-167 (ISFERGFIDY…NFDKQQRQTS (135 aa)). A helical membrane pass occupies residues 168-186 (WLIVALATLLAALATFLLA). An HAMP domain is found at 187–239 (RGLLAPVKRLVDGTHKLAAGDFTTRVTPTSEDELGKLAQDFNQLASTLEKNQQ). Residues 187–467 (RGLLAPVKRL…PLERDLQREV (281 aa)) lie on the Cytoplasmic side of the membrane. A Histidine kinase domain is found at 247-461 (DISHELRTPL…SITVELPLER (215 aa)). At His-250 the chain carries Phosphohistidine; by autocatalysis.

Post-translationally, autophosphorylated.

It is found in the cell inner membrane. It catalyses the reaction ATP + protein L-histidine = ADP + protein N-phospho-L-histidine.. Member of the two-component regulatory system BaeS/BaeR which responds to envelope stress. Activates expression of periplasmic chaperone spy in response to spheroplast formation, indole and P pili protein PapG overexpression. Activates BaeR by phosphorylation which then activates the mdtABCD and probably the CRISPR-Cas casABCDE-ygbT-ygbF operons. This chain is Signal transduction histidine-protein kinase BaeS, found in Escherichia coli (strain K12).